Reading from the N-terminus, the 117-residue chain is Large ribosomal subunit protein eL30B (117 aa).

Residues 1-14 are compositionally biased toward low complexity; sequence MSAAPTTAPVAAVS. The interval 1-22 is disordered; it reads MSAAPTTAPVAAVSKKGKKSGD.

It belongs to the eukaryotic ribosomal protein eL30 family. Component of the large ribosomal subunit (LSU). Mature yeast ribosomes consist of a small (40S) and a large (60S) subunit. The 40S small subunit contains 1 molecule of ribosomal RNA (18S rRNA) and at least 33 different proteins. The large 60S subunit contains 3 rRNA molecules (25S, 5.8S and 5S rRNA) and at least 46 different proteins.

It is found in the cytoplasm. Functionally, component of the ribosome, a large ribonucleoprotein complex responsible for the synthesis of proteins in the cell. The small ribosomal subunit (SSU) binds messenger RNAs (mRNAs) and translates the encoded message by selecting cognate aminoacyl-transfer RNA (tRNA) molecules. The large subunit (LSU) contains the ribosomal catalytic site termed the peptidyl transferase center (PTC), which catalyzes the formation of peptide bonds, thereby polymerizing the amino acids delivered by tRNAs into a polypeptide chain. The nascent polypeptides leave the ribosome through a tunnel in the LSU and interact with protein factors that function in enzymatic processing, targeting, and the membrane insertion of nascent chains at the exit of the ribosomal tunnel. The sequence is that of Large ribosomal subunit protein eL30B (rpl3002) from Schizosaccharomyces pombe (strain 972 / ATCC 24843) (Fission yeast).